A 561-amino-acid chain; its full sequence is Cation diffusion facilitator family protein 1 (561 aa).

Positions 1-20 are enriched in basic and acidic residues; the sequence is MEVTMEDRSVKADKADRDDN. The interval 1-26 is disordered; that stretch reads MEVTMEDRSVKADKADRDDNNTTSTE. Topologically, residues 1–112 are cytoplasmic; sequence MEVTMEDRSV…SESVKGVSRS (112 aa). A helical membrane pass occupies residues 113 to 133; sequence LIIQIGMTVIFCALEFITGVV. Residues 134–136 are Extracellular-facing; the sequence is CSS. The helical transmembrane segment at 137–157 threads the bilayer; sequence IAMLADSYHMAADVMALIVAF. The Cytoplasmic segment spans residues 158–176; sequence TCIKIATRPSTRLGYGWVR. The chain crosses the membrane as a helical span at residues 177–197; sequence AETLGGFFNGIFMCTVCVLVF. The Extracellular segment spans residues 198 to 215; that stretch reads QEAVGRIINVHMITHPLQ. Residues 216–236 form a helical membrane-spanning segment; that stretch reads VLVIGFIGLLINLFGMFNLSG. At 237 to 391 the chain is on the cytoplasmic side; that stretch reads HGHSHGGGSH…NVNIHGVWLH (155 aa). The segment at 240 to 304 is disordered; it reads SHGGGSHGHS…HTRLNGKFRS (65 aa). A 6 X 2 AA approximate repeats of H-G region spans residues 246–270; sequence HGHSHGGSHGHSHNNKKTKKNDGHG. The span at 247 to 264 shows a compositional bias: basic residues; it reads GHSHGGSHGHSHNNKKTK. The helical transmembrane segment at 392–412 threads the bilayer; that stretch reads LLSDAFGSVIVMISAGFVYFL. The Extracellular segment spans residues 413–420; the sequence is PTWKIAAY. A helical membrane pass occupies residues 421 to 441; it reads LDPILSISLASIMGFTAVVLV. The Cytoplasmic portion of the chain corresponds to 442–561; that stretch reads KTSGEKLLKQ…SVSTENEITE (120 aa).

The protein belongs to the cation diffusion facilitator (CDF) transporter (TC 2.A.4) family. SLC30A subfamily. In terms of assembly, interacts with lin-45 in a zinc-dependent manner. As to expression, expressed in intestinal cells. Expressed in the vulva.

It localises to the basolateral cell membrane. Involved in the regulation of Pn.p cell fate determination. Involved in zinc metabolism and the decrease of the cytosolic zinc concentration which is thought to modulate Ras signaling. Involved in zinc transport from the intestinal lumen to the pseudocoelum. The chain is Cation diffusion facilitator family protein 1 (cdf-1) from Caenorhabditis elegans.